Reading from the N-terminus, the 1103-residue chain is MQVPGTMPAPVLKGQALWLPLLLMLSPQASGGLVITPPGPELVLNISSTFVLTCSGPAPVVWERLSQEPLQKMARTQDGTFSSTLTLTNVTGLDTGEYFCTYKGSHGLEPDGRKRLYIFVPDPTMGFLPVDPEELFIFLTEITEITIPCRVTDPRLVVTLHEKKVDIPLPIPYDHQRGFSGTFEDKTYVCKTTIGDKEVDSEAYYVYSLQVSSINVSVNAVQTVVRQGENITIMCIVTGNEVVNFEWTYPRMESGRLVEPVTDFLFNVPSHIRSILHIPSAELGDSGTYICNVSESVNDHRDEKSINVTVVESGYVRLLGELDAVQFAELHRSRALQVVFEAYPPPTVVWFKDNRTLGDSSAGEIALSTRNVSETRYVSELTLVRVKVAEAGYYTMRAFHEDAEAQLSFQLQVNVPVRVLELSESHPASGEQTVRCRGRGMPQPHLTWSTCSDLKRCPRELPPTPLGNSSEEESQLETNVTYWPEDQEFEVVSTLRLRRVDQPLSVRCTLHNLLGHDMQEVTVVPHSLPFKVVVISAILALVVLTIISLIILIMLWQKKPRYEIRWKVIESVSSDGHEYIYVDPMQLPYDSTWELPRDQLVLGRTLGSGAFGQVVEATAHGLSHSQATMKVAVKMLKSTARSSEKQALMSELKIMSHLGPHLNVVNLLGACTKGGPIYIITEYCRYGDLVDYLHRNKHTFLQLCSDKRRPPSAELYSNALPAGLPLPSHVSLPGESDGGYMDMSKDESVDYVPMLDMKGGVKYADIESSSYMAPYDNYVPTAPERTCRATLINESPVLSYTDLVGFSYQVANGMEFLASKNCVHRDLAARNVLICEGKLVKICDFGLARDIMRDSNYISKGSTFLPLKWMAPESIFNSLYTTLSDVWSFGILLWEIFTLGGTPYPELPMNEQFYNAIKRGYRMAQPAHASDEIYEIMQKCWEEKFEIRPPFSQLVLLLERLLGEGYKKKYQQVDEEFLRSDHPAVLRSQARLPGFPGLRSPLDTSSVLYTAVQPNEGDNDYIIPLPDPKPEVADGPLESSPSLASSTLNEVNTSSTISCDSPLEPQEEPEPEPEPQPEPQVVPEPPLDSSCPGPRAEAEDSFL.

The signal sequence occupies residues 1–31 (MQVPGTMPAPVLKGQALWLPLLLMLSPQASG). 5 Ig-like C2-type domains span residues 33–120 (LVIT…YIFV), 129–210 (PVDP…YSLQ), 214–309 (INVS…INVT), 331–403 (HRSR…HEDA), and 416–524 (PVRV…VTVV). Topologically, residues 33–532 (LVITPPGPEL…VVPHSLPFKV (500 aa)) are extracellular. Asparagine 45 and asparagine 89 each carry an N-linked (GlcNAc...) asparagine glycan. Disulfide bonds link cysteine 54–cysteine 100 and cysteine 149–cysteine 190. Asparagine 215 and asparagine 230 each carry an N-linked (GlcNAc...) asparagine glycan. Cysteine 235 and cysteine 291 form a disulfide bridge. N-linked (GlcNAc...) asparagine glycans are attached at residues asparagine 292, asparagine 307, asparagine 354, asparagine 371, asparagine 468, and asparagine 479. Cysteine 436 and cysteine 508 are disulfide-bonded. Residues 533-553 (VVISAILALVVLTIISLIILI) form a helical membrane-spanning segment. Over 554–1103 (MLWQKKPRYE…PRAEAEDSFL (550 aa)) the chain is Cytoplasmic. Phosphotyrosine; by autocatalysis is present on residues tyrosine 562, tyrosine 579, and tyrosine 581. Positions 600–962 (LVLGRTLGSG…QLVLLLERLL (363 aa)) constitute a Protein kinase domain. Residues 606-614 (LGSGAFGQV) and lysine 634 contribute to the ATP site. Tyrosine 686 carries the post-translational modification Phosphotyrosine; by ABL1 and ABL2. Residues tyrosine 716, tyrosine 740, tyrosine 751, tyrosine 763, tyrosine 771, tyrosine 775, and tyrosine 778 each carry the phosphotyrosine; by autocatalysis modification. Aspartate 826 functions as the Proton acceptor in the catalytic mechanism. Position 857 is a phosphotyrosine; by autocatalysis (tyrosine 857). A phosphotyrosine; by ABL1 and ABL2 mark is found at tyrosine 934 and tyrosine 970. 2 positions are modified to phosphotyrosine; by autocatalysis: tyrosine 1009 and tyrosine 1021. Residues 1017–1103 (GDNDYIIPLP…PRAEAEDSFL (87 aa)) are disordered. The span at 1039–1059 (SSPSLASSTLNEVNTSSTISC) shows a compositional bias: polar residues. The span at 1065-1075 (PQEEPEPEPEP) shows a compositional bias: acidic residues. Residues 1076–1086 (QPEPQVVPEPP) show a composition bias toward pro residues.

Belongs to the protein kinase superfamily. Tyr protein kinase family. CSF-1/PDGF receptor subfamily. As to quaternary structure, interacts with homodimeric PDGFB and PDGFD, and with heterodimers formed by PDGFA and PDGFB. May also interact with homodimeric PDGFC. Monomer in the absence of bound ligand. Interaction with homodimeric PDGFB, heterodimers formed by PDGFA and PDGFB or homodimeric PDGFD, leads to receptor dimerization, where both PDGFRA homodimers and heterodimers with PDGFRB are observed. Interacts with SH2B2/APS. Interacts directly (tyrosine phosphorylated) with SHB. Interacts (tyrosine phosphorylated) with PIK3R1 and RASA1. Interacts (tyrosine phosphorylated) with CBL. Interacts (tyrosine phosphorylated) with SRC and SRC family kinases. Interacts (tyrosine phosphorylated) with PIK3C2B, maybe indirectly. Interacts (tyrosine phosphorylated) with SHC1, GRB7, GRB10 and NCK1. Interaction with GRB2 is mediated by SHC1. Interacts (via C-terminus) with NHERF1. In terms of processing, N-glycosylated. Post-translationally, ubiquitinated. After autophosphorylation, the receptor is polyubiquitinated, leading to its degradation. Autophosphorylated on tyrosine residues upon ligand binding. Autophosphorylation occurs in trans, i.e. one subunit of the dimeric receptor phosphorylates tyrosine residues on the other subunit. Phosphorylation at Tyr-579, and to a lesser degree, Tyr-581 is important for interaction with SRC. Phosphorylation at Tyr-716 is important for interaction with GRB2. Phosphorylation at Tyr-740 and Tyr-751 is important for interaction with PIK3R1. Phosphorylation at Tyr-751 is important for interaction with NCK1. Phosphorylation at Tyr-771 and Tyr-857 is important for interaction with RASA1/GAP. Phosphorylation at Tyr-857 is important for efficient phosphorylation of PLCG1 and PTPN11, resulting in increased phosphorylation of AKT1, MAPK1/ERK2 and/or MAPK3/ERK1, PDCD6IP/ALIX and STAM, and in increased cell proliferation. Phosphorylation at Tyr-1009 is important for interaction with PTPN11. Phosphorylation at Tyr-1009 and Tyr-1021 is important for interaction with PLCG1. Dephosphorylated by PTPRJ at Tyr-751, Tyr-857, Tyr-1009 and Tyr-1021. Dephosphorylated by PTPN2 at Tyr-579 and Tyr-1021.

It is found in the cell membrane. The protein localises to the cytoplasmic vesicle. It localises to the lysosome lumen. It carries out the reaction L-tyrosyl-[protein] + ATP = O-phospho-L-tyrosyl-[protein] + ADP + H(+). Present in an inactive conformation in the absence of bound ligand. Binding of PDGFB and/or PDGFD leads to dimerization and activation by autophosphorylation on tyrosine residues. Functionally, tyrosine-protein kinase that acts as a cell-surface receptor for homodimeric PDGFB and PDGFD and for heterodimers formed by PDGFA and PDGFB, and plays an essential role in the regulation of embryonic development, cell proliferation, survival, differentiation, chemotaxis and migration. Plays an essential role in blood vessel development by promoting proliferation, migration and recruitment of pericytes and smooth muscle cells to endothelial cells. Plays a role in the migration of vascular smooth muscle cells and the formation of neointima at vascular injury sites. Required for normal development of the cardiovascular system. Required for normal recruitment of pericytes (mesangial cells) in the kidney glomerulus, and for normal formation of a branched network of capillaries in kidney glomeruli. Promotes rearrangement of the actin cytoskeleton and the formation of membrane ruffles. Binding of its cognate ligands - homodimeric PDGFB, heterodimers formed by PDGFA and PDGFB or homodimeric PDGFD -leads to the activation of several signaling cascades; the response depends on the nature of the bound ligand and is modulated by the formation of heterodimers between PDGFRA and PDGFRB. Phosphorylates PLCG1, PIK3R1, PTPN11, RASA1/GAP, CBL, SHC1 and NCK1. Activation of PLCG1 leads to the production of the cellular signaling molecules diacylglycerol and inositol 1,4,5-trisphosphate, mobilization of cytosolic Ca(2+) and the activation of protein kinase C. Phosphorylation of PIK3R1, the regulatory subunit of phosphatidylinositol 3-kinase, leads to the activation of the AKT1 signaling pathway. Phosphorylation of SHC1, or of the C-terminus of PTPN11, creates a binding site for GRB2, resulting in the activation of HRAS, RAF1 and down-stream MAP kinases, including MAPK1/ERK2 and/or MAPK3/ERK1. Promotes phosphorylation and activation of SRC family kinases. Promotes phosphorylation of PDCD6IP/ALIX and STAM. Receptor signaling is down-regulated by protein phosphatases that dephosphorylate the receptor and its down-stream effectors, and by rapid internalization of the activated receptor. This Canis lupus familiaris (Dog) protein is Platelet-derived growth factor receptor beta (PDGFRB).